The primary structure comprises 425 residues: Protein PTI1 (425 aa).

S272 carries the post-translational modification Phosphoserine.

Component of the cleavage and polyadenylation factor (CPF) complex, which is composed of PTI1, SYC1, SSU72, GLC7, MPE1, REF2, PFS2, PTA1, YSH1/BRR5, SWD2, CFT2/YDH1, YTH1, CFT1/YHH1, FIP1 and PAP1. Component of the APT complex, which is a subcomplex of CPF, and is composed of PTI1, SYC1, SSU72, GLC7, REF2, PTA1 and SWD2.

The protein localises to the nucleus. Functionally, component of the cleavage and polyadenylation factor (CPF) complex, which plays a key role in polyadenylation-dependent pre-mRNA 3'-end formation and cooperates with cleavage factors including the CFIA complex and NAB4/CFIB. Component of the APT complex, which may be involved in polyadenylation-independent transcript 3'-end formation. PTI1 is required for 3'-end formation of snoRNAs. The polypeptide is Protein PTI1 (PTI1) (Saccharomyces cerevisiae (strain ATCC 204508 / S288c) (Baker's yeast)).